A 706-amino-acid chain; its full sequence is Cyclic nucleotide-gated channel alpha-3 (706 aa).

Over 1–189 the chain is Cytoplasmic; the sequence is MAKISTQYSH…MDPSSNMYYH (189 aa). The segment at 113-177 is disordered; that stretch reads RESHVQFNVG…PKKEEKKKDS (65 aa). The span at 147-177 shows a compositional bias: basic and acidic residues; the sequence is SEKDDKAKKEEKEKKEEKKENPKKEEKKKDS. A helical transmembrane segment spans residues 190-211; that stretch reads WLTVIAVPVFYNWCLLVCRACF. The Extracellular segment spans residues 212 to 217; that stretch reads DELQSE. A helical transmembrane segment spans residues 218–238; sequence HLMLWLVLDYSADILYGMDML. Residues 239–265 are Cytoplasmic-facing; it reads VRARTGFLEQGLMVMDASRLWKHYTQT. The chain crosses the membrane as a helical span at residues 266–285; the sequence is LHFKLDVLSLVPTDLAYFKL. The Extracellular portion of the chain corresponds to 286–289; that stretch reads GMNY. The helical transmembrane segment at 290-307 threads the bilayer; sequence PELRFNRLLKLARLFEFF. Residues 308–317 lie on the Cytoplasmic side of the membrane; it reads DRTETRTNYP. The interval 317–425 is ion conduction pathway; sequence PNMFRIGNLV…GNVGSMISNM (109 aa). Residues 318-340 traverse the membrane as a helical segment; that stretch reads NMFRIGNLVLYILIIIHWNACIY. At 341 to 366 the chain is on the extracellular side; that stretch reads FAISKFIGFGTDSWVYPNVSNPEYGR. N-linked (GalNAc...) asparagine glycosylation occurs at Asn-358. 2 helical membrane passes run 367 to 397 and 398 to 422; these read LSRK…DEEY and LFVV…GSMI. Residues 384–387 form a selectivity filter region; the sequence is TIGE. Residues 423 to 706 are Cytoplasmic-facing; it reads SNMNASRAEF…DAPQTEASQP (284 aa). The tract at residues 427–504 is C-linker; that stretch reads ASRAEFQAKI…TLRKVRIFQD (78 aa). Residues 507–627 form a cyclic nucleotide-binding domain region; it reads AGLLVELVLK…EEKGRQILMK (121 aa). Residues Gly-567, Glu-568, Ser-570, Arg-583, Thr-584, and Asp-628 each contribute to the 3',5'-cyclic GMP site. Residues 645 to 688 adopt a coiled-coil conformation; it reads IEEKVEHLETSLDSLQTRFARLLAEYNATQMKVKQRLSQLESQV. Positions 685–706 are disordered; the sequence is ESQVKMGLPPDGDAPQTEASQP.

It belongs to the cyclic nucleotide-gated cation channel (TC 1.A.1.5) family. CNGA3 subfamily. As to quaternary structure, forms heterotetrameric channels composed of CNGA3 and CNGB3 subunits with 3:1 stoichiometry. As to expression, testis, kidney, retinal cone (at protein level) and heart.

It is found in the cell membrane. The catalysed reaction is Ca(2+)(in) = Ca(2+)(out). It carries out the reaction Na(+)(in) = Na(+)(out). The enzyme catalyses K(+)(in) = K(+)(out). It catalyses the reaction NH4(+)(in) = NH4(+)(out). The catalysed reaction is Rb(+)(in) = Rb(+)(out). It carries out the reaction Li(+)(in) = Li(+)(out). The enzyme catalyses Cs(+)(in) = Cs(+)(out). With respect to regulation, ca(2+) influx is inhibited by extracellular Mg(2+) ions. Its function is as follows. Pore-forming subunit of the cone cyclic nucleotide-gated channel. Mediates cone photoresponses at bright light converting transient changes in intracellular cGMP levels into electrical signals. In the dark, cGMP levels are high and keep the channel open enabling a steady inward current carried by Na(+) and Ca(2+) ions that leads to membrane depolarization and neurotransmitter release from synaptic terminals. Upon photon absorption cGMP levels decline leading to channel closure and membrane hyperpolarization that ultimately slows neurotransmitter release and signals the presence of light, the end point of the phototransduction cascade. Pore-forming subunit of the gustatory cyclic nucleotide-gated channel. In the taste buds, may sense oral extracellular pH and conduct ion currents that modulate the excitability of taste cells. Conducts cGMP- and cAMP-gated ion currents, with permeability for monovalent and divalent cations. This is Cyclic nucleotide-gated channel alpha-3 from Bos taurus (Bovine).